Reading from the N-terminus, the 948-residue chain is Valine--tRNA ligase (948 aa).

Residues 40–50 carry the 'HIGH' region motif; that stretch reads PNVTGSLHMGH. The short motif at 551–555 is the 'KMSKS' region element; sequence KMSKS. ATP is bound at residue K554. Residues 879 to 947 adopt a coiled-coil conformation; it reads LIDKGAELAR…LAEQHARISS (69 aa).

It belongs to the class-I aminoacyl-tRNA synthetase family. ValS type 1 subfamily. As to quaternary structure, monomer.

It is found in the cytoplasm. It carries out the reaction tRNA(Val) + L-valine + ATP = L-valyl-tRNA(Val) + AMP + diphosphate. Functionally, catalyzes the attachment of valine to tRNA(Val). As ValRS can inadvertently accommodate and process structurally similar amino acids such as threonine, to avoid such errors, it has a 'posttransfer' editing activity that hydrolyzes mischarged Thr-tRNA(Val) in a tRNA-dependent manner. The chain is Valine--tRNA ligase from Pseudomonas fluorescens (strain ATCC BAA-477 / NRRL B-23932 / Pf-5).